Here is a 147-residue protein sequence, read N- to C-terminus: 3-hydroxyacyl-[acyl-carrier-protein] dehydratase FabZ (147 aa).

His51 is a catalytic residue.

The protein belongs to the thioester dehydratase family. FabZ subfamily.

It localises to the cytoplasm. The enzyme catalyses a (3R)-hydroxyacyl-[ACP] = a (2E)-enoyl-[ACP] + H2O. Its function is as follows. Involved in unsaturated fatty acids biosynthesis. Catalyzes the dehydration of short chain beta-hydroxyacyl-ACPs and long chain saturated and unsaturated beta-hydroxyacyl-ACPs. This chain is 3-hydroxyacyl-[acyl-carrier-protein] dehydratase FabZ, found in Anaplasma marginale (strain Florida).